Reading from the N-terminus, the 300-residue chain is Cytochrome b (300 aa).

6 helical membrane passes run 28-48, 72-94, 107-127, 168-187, 223-243, and 279-299; these read YGFLLGIVFFIQILKGVLLAL, WCFRYMHATGASFVFILTYLHIL, SWISGLMIFLISIVTAFYGYV, FFVFIYFPFIALCQSLFGIL, IPNKTAGLLVMLASLQILFLL, and IGCQLPQILHFIWSFIYYIIL. Positions 78 and 92 each coordinate heme b.

It belongs to the cytochrome b family. The main subunits of complex b-c1 are: cytochrome b, cytochrome c1 and the Rieske protein. Heme b serves as cofactor.

The protein localises to the mitochondrion inner membrane. Its function is as follows. Component of the ubiquinol-cytochrome c reductase complex (complex III or cytochrome b-c1 complex) that is part of the mitochondrial respiratory chain. The b-c1 complex mediates electron transfer from ubiquinol to cytochrome c. Contributes to the generation of a proton gradient across the mitochondrial membrane that is then used for ATP synthesis. The chain is Cytochrome b (MT-CYB) from Plasmodium gallinaceum.